Reading from the N-terminus, the 236-residue chain is Small ribosomal subunit protein uS2c (236 aa).

This sequence belongs to the universal ribosomal protein uS2 family.

The protein localises to the plastid. Its subcellular location is the chloroplast. In Oenothera parviflora (Small-flowered evening primrose), this protein is Small ribosomal subunit protein uS2c (rps2).